Reading from the N-terminus, the 406-residue chain is Cysteine desulfurase (406 aa).

N6-(pyridoxal phosphate)lysine is present on Lys226. The active-site Cysteine persulfide intermediate is Cys364.

This sequence belongs to the class-V pyridoxal-phosphate-dependent aminotransferase family. Csd subfamily. In terms of assembly, homodimer. Interacts with SufE and the SufBCD complex composed of SufB, SufC and SufD. The interaction with SufE is required to mediate the direct transfer of the sulfur atom from the S-sulfanylcysteine. Requires pyridoxal 5'-phosphate as cofactor.

It is found in the cytoplasm. The catalysed reaction is (sulfur carrier)-H + L-cysteine = (sulfur carrier)-SH + L-alanine. The enzyme catalyses L-selenocysteine + AH2 = hydrogenselenide + L-alanine + A + H(+). Its pathway is cofactor biosynthesis; iron-sulfur cluster biosynthesis. In terms of biological role, cysteine desulfurases mobilize the sulfur from L-cysteine to yield L-alanine, an essential step in sulfur metabolism for biosynthesis of a variety of sulfur-containing biomolecules. Component of the suf operon, which is activated and required under specific conditions such as oxidative stress and iron limitation. Acts as a potent selenocysteine lyase in vitro, that mobilizes selenium from L-selenocysteine. Selenocysteine lyase activity is however unsure in vivo. The chain is Cysteine desulfurase from Escherichia coli O139:H28 (strain E24377A / ETEC).